Consider the following 1305-residue polypeptide: Cyclin-G-associated kinase (1305 aa).

The residue at position 2 (serine 2) is an N-acetylserine. Phosphoserine is present on residues serine 2 and serine 16. A Protein kinase domain is found at leucine 40–alanine 317. Residues leucine 46–valine 54 and lysine 69 each bind ATP. The active-site Proton acceptor is the aspartate 173. The Phosphatase tensin-type domain maps to serine 397–glutamate 564. Serine 454 carries the post-translational modification Phosphoserine. One can recognise a C2 tensin-type domain in the interval serine 570 to glutamate 708. Disordered stretches follow at residues valine 707–isoleucine 732 and phenylalanine 747–threonine 854. Serine 768 carries the phosphoserine modification. Threonine 774 is subject to Phosphothreonine. Residues serine 776–phenylalanine 789 show a composition bias toward polar residues. The residue at position 781 (serine 781) is a Phosphoserine. Phosphothreonine is present on threonine 792. Positions leucine 805 to valine 816 are enriched in polar residues. Serine 809, serine 824, and serine 827 each carry phosphoserine. Acidic residues predominate over residues aspartate 822–alanine 832. The segment covering serine 836–proline 848 has biased composition (basic and acidic residues). A Phosphoserine modification is found at serine 938. The interval aspartate 1037–arginine 1139 is disordered. The segment covering aspartate 1084–leucine 1099 has biased composition (low complexity). Positions threonine 1111 to proline 1132 are enriched in polar residues. At arginine 1122 the chain carries Omega-N-methylarginine. Residue serine 1171 is modified to Phosphoserine. The 65-residue stretch at serine 1241 to phenylalanine 1305 folds into the J domain.

Belongs to the protein kinase superfamily. Ser/Thr protein kinase family.

The protein localises to the cytoplasm. The protein resides in the perinuclear region. It is found in the golgi apparatus. Its subcellular location is the trans-Golgi network. It localises to the cell junction. The protein localises to the focal adhesion. The protein resides in the cytoplasmic vesicle. It is found in the clathrin-coated vesicle. It carries out the reaction L-seryl-[protein] + ATP = O-phospho-L-seryl-[protein] + ADP + H(+). The catalysed reaction is L-threonyl-[protein] + ATP = O-phospho-L-threonyl-[protein] + ADP + H(+). Associates with cyclin G and CDK5. Seems to act as an auxilin homolog that is involved in the uncoating of clathrin-coated vesicles by Hsc70 in non-neuronal cells. Expression oscillates slightly during the cell cycle, peaking at G1. May play a role in clathrin-mediated endocytosis and intracellular trafficking, and in the dynamics of clathrin assembly/disassembly. The sequence is that of Cyclin-G-associated kinase from Mus musculus (Mouse).